A 158-amino-acid polypeptide reads, in one-letter code: Transcriptional repressor NrdR (158 aa).

A zinc finger lies at 3–34 (CPSCQNTDSRVLESRAAEGGRSVRRRRECLNC). One can recognise an ATP-cone domain in the interval 49 to 139 (ITVIKRNGHR…VYRHFRSVSD (91 aa)).

The protein belongs to the NrdR family. Zn(2+) is required as a cofactor.

In terms of biological role, negatively regulates transcription of bacterial ribonucleotide reductase nrd genes and operons by binding to NrdR-boxes. The polypeptide is Transcriptional repressor NrdR (Synechococcus sp. (strain CC9311)).